Here is a 340-residue protein sequence, read N- to C-terminus: Short-chain dehydrogenase/reductase prx1 (340 aa).

5 residues coordinate NADP(+): Ile-60, Lys-84, Asp-104, Asn-131, and Lys-162. Ser-184 serves as the catalytic Proton donor. Positions 210 and 214 each coordinate NADP(+). Tyr-210 serves as the catalytic Proton acceptor. The Lowers pKa of active site Tyr role is filled by Lys-214.

This sequence belongs to the short-chain dehydrogenases/reductases (SDR) family.

Its pathway is sesquiterpene biosynthesis. Short-chain dehydrogenase/reductase; part of the gene cluster that mediates the biosynthesis of PR-toxin, a bicyclic sesquiterpene belonging to the eremophilane class and acting as a mycotoxin. The first step of the pathway is catalyzed by the aristolochene synthase which performs the cyclization of trans,trans-farnesyl diphosphate (FPP) to the bicyclic sesquiterpene aristolochene. Following the formation of aristolochene, the non-oxygenated aristolochene is converted to the trioxygenated intermediate eremofortin B, via 7-epi-neopetasone. This conversion appears to involve three enzymes, a hydroxysterol oxidase-like enzyme, the quinone-oxidase prx3 that forms the quinone-type-structure in the bicyclic nucleus of aristolochene with the C8-oxo group and the C-3 hydroxyl group, and the P450 monooxygenase ORF6 that introduces the epoxide at the double bond between carbons 1 and 2. No monoxy or dioxy-intermediates have been reported to be released to the broth, so these three early oxidative reactions may be coupled together. Eremofortin B is further oxidized by another P450 monooxygenase, that introduces a second epoxide between carbons 7 and 11 prior to acetylation to eremofortin A by the acetyltransferase ORF8. The second epoxidation may be performed by a second P450 monooxygenase. After the acetylation step, eremofortin A is converted to eremofortin C and then to PR-toxin. First the conversion of eremofortin A to eremofortin C proceeds by oxidation of the side chain of the molecule at C-12 and is catalyzed by the short-chain oxidoreductase prx1. The cytochrome P450 monooxygenase ORF6 is probably also involved in this step. The primary alcohol formed at C-12 is finally oxidized by the short-chain alcohol dehydrogenase prx4 that forms PR-toxin. The protein is Short-chain dehydrogenase/reductase prx1 of Penicillium roqueforti (strain FM164).